A 602-amino-acid chain; its full sequence is Elongation factor 4 (602 aa).

One can recognise a tr-type G domain in the interval 2-184 (NHIRNFSIIA…AVVAKVPPPK (183 aa)). GTP contacts are provided by residues 14 to 19 (DHGKST) and 131 to 134 (NKMD).

It belongs to the TRAFAC class translation factor GTPase superfamily. Classic translation factor GTPase family. LepA subfamily.

It is found in the cell inner membrane. The catalysed reaction is GTP + H2O = GDP + phosphate + H(+). Functionally, required for accurate and efficient protein synthesis under certain stress conditions. May act as a fidelity factor of the translation reaction, by catalyzing a one-codon backward translocation of tRNAs on improperly translocated ribosomes. Back-translocation proceeds from a post-translocation (POST) complex to a pre-translocation (PRE) complex, thus giving elongation factor G a second chance to translocate the tRNAs correctly. Binds to ribosomes in a GTP-dependent manner. This is Elongation factor 4 from Delftia acidovorans (strain DSM 14801 / SPH-1).